The sequence spans 130 residues: MDEKEFKRLLRVRARLKRKKPRFLRQEWWRYPKFKNDPKWRRPKGIDSKMRLKLKGKPRSPSIGWSSPKLVRGLHPSGYEEVLVHNVKELEALDPKRQAARIAHTVGKKKRIEIIKRAEELGIKVLNPRV.

The protein belongs to the eukaryotic ribosomal protein eL32 family. Part of the 50S ribosomal subunit.

In Pyrococcus furiosus (strain ATCC 43587 / DSM 3638 / JCM 8422 / Vc1), this protein is Large ribosomal subunit protein eL32.